The sequence spans 311 residues: MDSPSGSLSPVAIDLAGVSKSYGGKIVVNDLSFTIAAGECFGLLGPNGAGKSTITRMILGMTSPSVGKITVLGAQEPGQVRLARAKIGIVSQFDNLDLEFTVRENLLVYGRYFRMSTREIETVIPSLLEFARLESKANTRVADLSGGMKRRLTLAGALINDPQLLILDEPTTGLDPHARHLIWERLRSLLARGKTILLTTHIMEEAERLCDRLCVLEAGRKIAEGRPHALIEEQIGCPVIEIYGGDPQELSLLIRPNARRLEISGETLFCYTPDPEQVRAQLRAYSNLRLLERPPNLEDVFLRLTGREMEK.

The ABC transporter domain maps to 13-243 (IDLAGVSKSY…QIGCPVIEIY (231 aa)). Residue 45 to 52 (GPNGAGKS) participates in ATP binding.

Belongs to the ABC transporter superfamily. Lipooligosaccharide exporter (TC 3.A.1.102) family. In terms of assembly, the complex is composed of two ATP-binding proteins (NodI) and two transmembrane proteins (NodJ).

The protein resides in the cell inner membrane. Functionally, part of the ABC transporter complex NodIJ involved in the export of the nodulation factors (Nod factors), the bacterial signal molecules that induce symbiosis and subsequent nodulation induction. Nod factors are LCO (lipo-chitin oligosaccharide), a modified beta-1,4-linked N-acetylglucosamine oligosaccharide. This subunit is responsible for energy coupling to the transport system. The chain is Nod factor export ATP-binding protein I from Rhizobium leguminosarum bv. viciae.